Reading from the N-terminus, the 342-residue chain is Protein rough sheath 2 homolog (342 aa).

HTH myb-type domains lie at 1–58 (MQPP…KNYL) and 59–113 (RPGI…EKQQ). 2 DNA-binding regions (H-T-H motif) span residues 32–58 (WSLVSQRMNRPLHRDAKSCLERWKNYL) and 86–109 (WKKIAAEVPGRTAKRLGKWWEVFK). Positions 253 to 304 (RRREATEEFEAKMRALREEQAAAVERVEAEYREKMAGLRRDAEAKEQKMAEQ) form a coiled coil.

The protein localises to the nucleus. Its function is as follows. Transcription factor required for normal cell differentiation. May interact with other proteins to repress the knox homeobox genes. The chain is Protein rough sheath 2 homolog (RS2) from Oryza sativa subsp. japonica (Rice).